A 364-amino-acid chain; its full sequence is Mannose-1-phosphate guanyltransferase (364 aa).

This sequence belongs to the transferase hexapeptide repeat family.

It is found in the cytoplasm. The enzyme catalyses alpha-D-mannose 1-phosphate + GTP + H(+) = GDP-alpha-D-mannose + diphosphate. The protein operates within nucleotide-sugar biosynthesis; GDP-alpha-D-mannose biosynthesis; GDP-alpha-D-mannose from alpha-D-mannose 1-phosphate (GTP route): step 1/1. Involved in cell wall synthesis where it is required for glycosylation. Involved in cell cycle progression through cell-size checkpoint. In Neurospora crassa (strain ATCC 24698 / 74-OR23-1A / CBS 708.71 / DSM 1257 / FGSC 987), this protein is Mannose-1-phosphate guanyltransferase (mpg-1).